Here is a 242-residue protein sequence, read N- to C-terminus: NAD(P)H-quinone oxidoreductase subunit K (242 aa).

Positions 60, 61, 125, and 156 each coordinate [4Fe-4S] cluster.

It belongs to the complex I 20 kDa subunit family. NDH-1 can be composed of about 15 different subunits; different subcomplexes with different compositions have been identified which probably have different functions. [4Fe-4S] cluster is required as a cofactor.

Its subcellular location is the cellular thylakoid membrane. The catalysed reaction is a plastoquinone + NADH + (n+1) H(+)(in) = a plastoquinol + NAD(+) + n H(+)(out). It carries out the reaction a plastoquinone + NADPH + (n+1) H(+)(in) = a plastoquinol + NADP(+) + n H(+)(out). Its function is as follows. NDH-1 shuttles electrons from an unknown electron donor, via FMN and iron-sulfur (Fe-S) centers, to quinones in the respiratory and/or the photosynthetic chain. The immediate electron acceptor for the enzyme in this species is believed to be plastoquinone. Couples the redox reaction to proton translocation, and thus conserves the redox energy in a proton gradient. Cyanobacterial NDH-1 also plays a role in inorganic carbon-concentration. The chain is NAD(P)H-quinone oxidoreductase subunit K from Prochlorococcus marinus (strain SARG / CCMP1375 / SS120).